Here is a 352-residue protein sequence, read N- to C-terminus: Phosphoribosylformylglycinamidine cyclo-ligase (352 aa).

This sequence belongs to the AIR synthase family.

It localises to the cytoplasm. It carries out the reaction 2-formamido-N(1)-(5-O-phospho-beta-D-ribosyl)acetamidine + ATP = 5-amino-1-(5-phospho-beta-D-ribosyl)imidazole + ADP + phosphate + H(+). The protein operates within purine metabolism; IMP biosynthesis via de novo pathway; 5-amino-1-(5-phospho-D-ribosyl)imidazole from N(2)-formyl-N(1)-(5-phospho-D-ribosyl)glycinamide: step 2/2. This Ectopseudomonas mendocina (strain ymp) (Pseudomonas mendocina) protein is Phosphoribosylformylglycinamidine cyclo-ligase.